The chain runs to 100 residues: NADH-quinone oxidoreductase subunit K (100 aa).

A run of 3 helical transmembrane segments spans residues 2–22 (ITLTHYLILSAILFSIALVGI), 29–49 (LMLFFATEIALNAVNIALAAF), and 63–83 (FFIIAIAASEVAVGLGLLIIW).

It belongs to the complex I subunit 4L family. As to quaternary structure, NDH-1 is composed of 14 different subunits. Subunits NuoA, H, J, K, L, M, N constitute the membrane sector of the complex.

It localises to the cell inner membrane. It carries out the reaction a quinone + NADH + 5 H(+)(in) = a quinol + NAD(+) + 4 H(+)(out). Its function is as follows. NDH-1 shuttles electrons from NADH, via FMN and iron-sulfur (Fe-S) centers, to quinones in the respiratory chain. The immediate electron acceptor for the enzyme in this species is believed to be ubiquinone. Couples the redox reaction to proton translocation (for every two electrons transferred, four hydrogen ions are translocated across the cytoplasmic membrane), and thus conserves the redox energy in a proton gradient. This is NADH-quinone oxidoreductase subunit K from Nitratiruptor sp. (strain SB155-2).